The primary structure comprises 242 residues: Megakaryocyte and platelet inhibitory receptor G6b (242 aa).

The first 17 residues, 1–17 (MALVLPLLPLLLSKVQG), serve as a signal peptide directing secretion. Asparagine 32 and asparagine 112 each carry an N-linked (GlcNAc...) asparagine glycan. The helical transmembrane segment at 141-161 (VLIPLLGVGLVLGLGVAGVVW) threads the bilayer. Short sequence motifs (ITIM motif) lie at residues 210–215 (LHYADL) and 236–241 (TVYAVV). Tyrosine 212 carries the phosphotyrosine modification.

In terms of assembly, interacts (via ITIM motif) with PTPN6 and PTPN11. Binds to heparin. N-glycosylated. In terms of processing, may be O-glycosylated. Post-translationally, phosphorylated. As to expression, expressed in mature megakaryocytes and platelets. Not expressed by immature megakaryocytes.

It localises to the cell membrane. Functionally, inhibitory receptor that acts as a critical regulator of hematopoietic lineage differentiation, megakaryocyte function and platelet production. Inhibits platelet aggregation and activation by agonists such as ADP and collagen-related peptide. This regulation of megakaryocate function as well as platelet production ann activation is done through the inhibition (via the 2 ITIM motifs) of the receptors CLEC1B and GP6:FcRgamma signaling. Appears to operate in a calcium-independent manner. This chain is Megakaryocyte and platelet inhibitory receptor G6b, found in Mus musculus (Mouse).